The chain runs to 152 residues: Xanthine-guanine phosphoribosyltransferase (152 aa).

Residues 37–38, R69, and 88–96 each bind 5-phospho-alpha-D-ribose 1-diphosphate; these read RG and DDLVDTGGT. R69 lines the GMP pocket. Residue D89 participates in Mg(2+) binding. The guanine site is built by D92 and I135. Positions 92 and 135 each coordinate xanthine. GMP is bound by residues 92 to 96 and 134 to 135; these read DTGGT and WI.

Belongs to the purine/pyrimidine phosphoribosyltransferase family. XGPT subfamily. In terms of assembly, homotetramer. Requires Mg(2+) as cofactor.

It is found in the cell inner membrane. The catalysed reaction is GMP + diphosphate = guanine + 5-phospho-alpha-D-ribose 1-diphosphate. It catalyses the reaction XMP + diphosphate = xanthine + 5-phospho-alpha-D-ribose 1-diphosphate. The enzyme catalyses IMP + diphosphate = hypoxanthine + 5-phospho-alpha-D-ribose 1-diphosphate. Its pathway is purine metabolism; GMP biosynthesis via salvage pathway; GMP from guanine: step 1/1. It functions in the pathway purine metabolism; XMP biosynthesis via salvage pathway; XMP from xanthine: step 1/1. Its function is as follows. Purine salvage pathway enzyme that catalyzes the transfer of the ribosyl-5-phosphate group from 5-phospho-alpha-D-ribose 1-diphosphate (PRPP) to the N9 position of the 6-oxopurines guanine and xanthine to form the corresponding ribonucleotides GMP (guanosine 5'-monophosphate) and XMP (xanthosine 5'-monophosphate), with the release of PPi. To a lesser extent, also acts on hypoxanthine. The protein is Xanthine-guanine phosphoribosyltransferase of Serratia proteamaculans (strain 568).